A 109-amino-acid chain; its full sequence is Spermidine export protein MdtI (109 aa).

4 helical membrane passes run 6–26, 36–56, 64–84, and 88–108; these read WIHA…NVFL, VYGI…SQAV, AYAL…WVLF, and LNNK…LIKL.

It belongs to the drug/metabolite transporter (DMT) superfamily. Small multidrug resistance (SMR) (TC 2.A.7.1) family. MdtI subfamily. In terms of assembly, forms a complex with MdtJ.

Its subcellular location is the cell inner membrane. Catalyzes the excretion of spermidine. This chain is Spermidine export protein MdtI, found in Klebsiella pneumoniae (strain 342).